The primary structure comprises 390 residues: Protein SOSEKI 4 (390 aa).

The DIX-like oligomerization domain stretch occupies residues 22–115 (RMAEVLYVLS…YALKATKRFD (94 aa)). 2 disordered regions span residues 210–247 (KSNSGATKRGKASVTPKQCHPSSRPAYWEFSPQGNRTG) and 291–321 (RESNNSESSDDEQPSVQAETHVSKLSKSGGS). Positions 304–321 (PSVQAETHVSKLSKSGGS) are enriched in polar residues.

The protein belongs to the SOSEKI family. As to quaternary structure, homodimer. Forms long polymer filaments with other SOKs proteins polymers crucial for polar localization and biological activity.

Its subcellular location is the cell membrane. Functionally, SOSEKI proteins locally interpret global polarity cues and can influence cell division orientation to coordinate cell polarization relative to body axes. The sequence is that of Protein SOSEKI 4 from Physcomitrium patens (Spreading-leaved earth moss).